The following is a 352-amino-acid chain: O(6)-methylguanine-induced apoptosis 2 (352 aa).

7 STPGR repeats span residues 80 to 90, 124 to 139, 165 to 171, 205 to 235, 244 to 263, 286 to 295, and 325 to 335; these read NPGPGAYNVAR, PAPN…FSKK, PAPNQYS, GPSP…KTSR, NPGP…KKII, PGPGHYDIVD, and LPGPGAYHPEI.

The protein belongs to the STPG1 family.

The protein localises to the cytoplasm. It is found in the nucleus. Its function is as follows. May positively contribute to the induction of apoptosis triggered by O(6)-methylguanine. In Xenopus laevis (African clawed frog), this protein is O(6)-methylguanine-induced apoptosis 2 (stpg1).